The chain runs to 600 residues: Estrogen receptor (600 aa).

The tract at residues 1–189 is modulating (transactivation AF-1); mediates interaction with MACROD1; the sequence is MTMTLHTKAS…IMESAKETRY (189 aa). O-linked (GlcNAc) serine glycosylation is present at serine 10. The segment at 35–47 is required for interaction with NCOA1; it reads MERALGEVYVDNS. The tract at residues 35 to 179 is interaction with DDX5; self-association; it reads MERALGEVYV…LSSSSEKGNM (145 aa). Residues serine 109 and serine 111 each carry the phosphoserine; by CDK2 modification. The residue at position 123 (serine 123) is a Phosphoserine. Positions 148–177 are disordered; that stretch reads DTGPPAFYRSNSDNRRQNGRERLSSSSEKG. Residues 159-170 are compositionally biased toward basic and acidic residues; sequence SDNRRQNGRERL. Residue serine 172 is modified to Phosphoserine; by CK2. NR C4-type zinc fingers lie at residues 190–210 and 226–250; these read CAVC…CEGC and CPAT…LRKC. The nuclear receptor DNA-binding region spans 190 to 255; it reads CAVCNDYASG…RLRKCYEVGM (66 aa). The interval 190–315 is mediates interaction with DNTTIP2; that stretch reads CAVCNDYASG…TKKNSPALSL (126 aa). Residues 256–315 are hinge; the sequence is MKGGIRKDRRGGRMLKHKRQRDDLEGRNEMGTSGDMRAANLWPSPLVIKHTKKNSPALSL. Arginine 265 is modified (asymmetric dimethylarginine; by PRMT1). The interaction with AKAP13 stretch occupies residues 267 to 600; sequence GRMLKHKRQR…PEAEGFPNTI (334 aa). Residues 269 to 600 are self-association; the sequence is MLKHKRQRDD…PEAEGFPNTI (332 aa). An NR LBD domain is found at 316 to 552; the sequence is TADQMVSALL…DLLLEMLDAH (237 aa). The tract at residues 316-600 is transactivation AF-2; sequence TADQMVSALL…PEAEGFPNTI (285 aa). Positions 358 and 399 each coordinate 17beta-estradiol. Cysteine 452 carries the S-palmitoyl cysteine lipid modification. Histidine 529 lines the 17beta-estradiol pocket. At tyrosine 542 the chain carries Phosphotyrosine; by Tyr-kinases. The disordered stretch occupies residues 558–581; that stretch reads ASRMGVPPEEPSQSQLTTTSSTSA. Residues 569-581 are compositionally biased toward low complexity; the sequence is SQSQLTTTSSTSA. O-linked (GlcNAc) threonine glycosylation occurs at threonine 576.

This sequence belongs to the nuclear hormone receptor family. NR3 subfamily. In terms of assembly, interacts with BCAS3. Binds DNA as a homodimer. Can form a heterodimer with ESR2. Interacts with coactivator NCOA5. Interacts with PELP1, the interaction is enhanced by 17-beta-estradiol; the interaction increases ESR1 transcriptional activity. Interacts with NCOA7; the interaction is ligand-inducible. Interacts with AKAP13, CUEDC2, HEXIM1, KDM5A, MAP1S, SMARD1, and UBE1C. Interacts with MUC1; the interaction is stimulated by 7 beta-estradiol (E2) and enhances ESR1-mediated transcription. Interacts with DNTTIP2, and UIMC1. Interacts with KMT2D/MLL2. Interacts with ATAD2; the interaction is enhanced by estradiol. Interacts with KIF18A and LDB1. Interacts with RLIM (via its C-terminus). Interacts with MACROD1. Interacts with SH2D4A and PLCG. Interacts with SH2D4A; the interaction blocks binding to PLCG and inhibits estrogen-induced cell proliferation. Interacts with DYNLL1. Interacts with CCDC62; the interaction requires estradiol and appears to enhance the transcription of target genes. Interacts with NR2C1; the interaction prevents homodimerization of ESR1 and suppresses its transcriptional activity and cell growth. Interacts with DNAAF4. Interacts with PRMT2. Interacts with RBFOX2. Interacts with EP300; the interaction is estrogen-dependent and enhanced by CITED1. Interacts with CITED1; the interaction is estrogen-dependent. Interacts with FAM120B, FOXL2, PHB2 and SLC30A9. Interacts with coactivators NCOA3 and NCOA6. Interacts with STK3/MST2 only in the presence of SAV1 and vice-versa. Binds to CSNK1D. Interacts with NCOA2; NCOA2 can interact with ESR1 AF-1 and AF-2 domains simultaneously and mediate their transcriptional synergy. Interacts with DDX5. Interacts with NCOA1; the interaction seems to require a self-association of N-terminal and C-terminal regions. Interacts with ZNF366, DDX17, NFKB1, RELA, SP1 and SP3. Interacts with NRIP1. Interacts with GPER1; the interaction occurs in an estrogen-dependent manner. Interacts with TRIP4 (ufmylated); estrogen dependent. Interacts with LMTK3; the interaction phosphorylates ESR1 (in vitro) and protects it against proteasomal degradation. Interacts with CCAR2 (via N-terminus) in a ligand-independent manner. Interacts with ZFHX3. Interacts with SFR1 in a ligand-dependent and -independent manner. Interacts with DCAF13, LATS1 and DCAF1; regulates ESR1 ubiquitination and ubiquitin-mediated proteasomal degradation. Interacts (via DNA-binding domain) with POU4F2 (C-terminus); this interaction increases the estrogen receptor ESR1 transcriptional activity in a DNA- and ligand 17-beta-estradiol-independent manner. Interacts with ESRRB isoform 1. Interacts with UBE3A and WBP2. Interacts with GTF2B. Interacts with RBM39. In the absence of hormonal ligand, interacts with TACC1. Interacts with PI3KR1 or PI3KR2 and PTK2/FAK1. Interacts with SRC. Interacts with BAG1; the interaction is promoted in the absence of estradiol (17-beta-estradiol/E2). Interacts with and ubiquitinated by STUB1; the interaction is promoted in the absence of estradiol (17-beta-estradiol/E2). Interacts with NEDD8. Post-translationally, phosphorylated by cyclin A/CDK2 and CK1. Phosphorylation probably enhances transcriptional activity. Dephosphorylation at Ser-123 by PPP5C inhibits its transactivation activity. Phosphorylated by LMTK3 (in vitro). Ubiquitinated; regulated by LATS1 via DCAF1 it leads to ESR1 proteasomal degradation. Deubiquitinated by OTUB1. Ubiquitinated by STUB1/CHIP; in the CA1 hippocampal region following loss of endogenous circulating estradiol (17-beta-estradiol/E2). Ubiquitinated by UBR5, leading to its degradation: UBR5 specifically recognizes and binds ligand-bound ESR1 when it is not associated with coactivators (NCOAs). In presence of NCOAs, the UBR5-degron is not accessible, preventing its ubiquitination and degradation. In terms of processing, palmitoylated at Cys-452 by ZDHHC7 and ZDHHC21. This modification is required for plasma membrane targeting and for rapid intracellular signaling via ERK and AKT kinases and cAMP generation, but not for signaling mediated by the nuclear hormone receptor. Post-translationally, dimethylated by PRMT1 at Arg-265. The methylation may favor cytoplasmic localization. Demethylated by JMJD6 at Arg-265. In terms of tissue distribution, expressed in the CA1 region of the hippocampus, expression decreases with age (at protein level). Expressed in the uterus (at protein level).

The protein resides in the nucleus. It localises to the cytoplasm. The protein localises to the golgi apparatus. It is found in the cell membrane. Nuclear hormone receptor. The steroid hormones and their receptors are involved in the regulation of eukaryotic gene expression and affect cellular proliferation and differentiation in target tissues. Ligand-dependent nuclear transactivation involves either direct homodimer binding to a palindromic estrogen response element (ERE) sequence or association with other DNA-binding transcription factors, such as AP-1/c-Jun, c-Fos, ATF-2, Sp1 and Sp3, to mediate ERE-independent signaling. Ligand binding induces a conformational change allowing subsequent or combinatorial association with multiprotein coactivator complexes through LXXLL motifs of their respective components. Mutual transrepression occurs between the estrogen receptor (ER) and NF-kappa-B in a cell-type specific manner. Decreases NF-kappa-B DNA-binding activity and inhibits NF-kappa-B-mediated transcription from the IL6 promoter and displace RELA/p65 and associated coregulators from the promoter. Recruited to the NF-kappa-B response element of the CCL2 and IL8 promoters and can displace CREBBP. Present with NF-kappa-B components RELA/p65 and NFKB1/p50 on ERE sequences. Can also act synergistically with NF-kappa-B to activate transcription involving respective recruitment adjacent response elements; the function involves CREBBP. Can activate the transcriptional activity of TFF1. Also mediates membrane-initiated estrogen signaling involving various kinase cascades. Essential for MTA1-mediated transcriptional regulation of BRCA1 and BCAS3. Maintains neuronal survival in response to ischemic reperfusion injury when in the presence of circulating estradiol (17-beta-estradiol/E2). The protein is Estrogen receptor (Esr1) of Rattus norvegicus (Rat).